We begin with the raw amino-acid sequence, 212 residues long: ATP synthase F(0) complex subunit a (212 aa).

Transmembrane regions (helical) follow at residues Met-3–Ser-23, Trp-58–Leu-78, Gln-87–Leu-107, Ile-128–Val-148, Leu-154–Thr-174, and Ala-179–Ile-199.

The protein belongs to the ATPase A chain family. In terms of assembly, component of the ATP synthase complex composed at least of ATP5F1A/subunit alpha, ATP5F1B/subunit beta, ATP5MC1/subunit c (homooctomer), MT-ATP6/subunit a, MT-ATP8/subunit 8, ATP5ME/subunit e, ATP5MF/subunit f, ATP5MG/subunit g, ATP5MK/subunit k, ATP5MJ/subunit j, ATP5F1C/subunit gamma, ATP5F1D/subunit delta, ATP5F1E/subunit epsilon, ATP5PF/subunit F6, ATP5PB/subunit b, ATP5PD/subunit d, ATP5PO/subunit OSCP. ATP synthase complex consists of a soluble F(1) head domain (subunits alpha(3) and beta(3)) - the catalytic core - and a membrane F(0) domain - the membrane proton channel (subunits c, a, 8, e, f, g, k and j). These two domains are linked by a central stalk (subunits gamma, delta, and epsilon) rotating inside the F1 region and a stationary peripheral stalk (subunits F6, b, d, and OSCP). Interacts with DNAJC30; interaction is direct.

Its subcellular location is the mitochondrion inner membrane. It carries out the reaction H(+)(in) = H(+)(out). Functionally, subunit a, of the mitochondrial membrane ATP synthase complex (F(1)F(0) ATP synthase or Complex V) that produces ATP from ADP in the presence of a proton gradient across the membrane which is generated by electron transport complexes of the respiratory chain. ATP synthase complex consist of a soluble F(1) head domain - the catalytic core - and a membrane F(1) domain - the membrane proton channel. These two domains are linked by a central stalk rotating inside the F(1) region and a stationary peripheral stalk. During catalysis, ATP synthesis in the catalytic domain of F(1) is coupled via a rotary mechanism of the central stalk subunits to proton translocation. With the subunit c (ATP5MC1), forms the proton-conducting channel in the F(0) domain, that contains two crucial half-channels (inlet and outlet) that facilitate proton movement from the mitochondrial intermembrane space (IMS) into the matrix. Protons are taken up via the inlet half-channel and released through the outlet half-channel, following a Grotthuss mechanism. The chain is ATP synthase F(0) complex subunit a from Tropidurus montanus (Lizard).